Consider the following 522-residue polypeptide: Putative glucosylceramidase 3 (522 aa).

An N-terminal signal peptide occupies residues 1–21 (MSRWKVVILCLLSFMFEIGHA). Catalysis depends on Glu-259, which acts as the Proton donor. Catalysis depends on Glu-364, which acts as the Nucleophile.

This sequence belongs to the glycosyl hydrolase 30 family.

The catalysed reaction is a beta-D-glucosylceramide + H2O = an N-acyl-sphingoid base + D-glucose. It catalyses the reaction a beta-D-glucosyl-(1&lt;-&gt;1')-N-acylsphing-4-enine + H2O = an N-acylsphing-4-enine + D-glucose. The enzyme catalyses an N-acyl-1-beta-D-glucosyl-15-methylhexadecasphing-4-enine + H2O = an N-acyl-15-methylhexadecasphing-4-enine + D-glucose. It functions in the pathway lipid metabolism; sphingolipid metabolism. In terms of biological role, glucosylceramidase that catalyzes the hydrolysis of glucosylceramides into free ceramides and glucose. C.elegans contain specific sphingoid bases, which are unique or different in structure compared to the sphingoid bases found in other animals. Two examples of these distinctive compounds are: 15-methylhexadecasphinganine and 15-methylhexadecasphing-4-enine. The chain is Putative glucosylceramidase 3 from Caenorhabditis elegans.